We begin with the raw amino-acid sequence, 140 residues long: UPF0132 membrane protein MJ1527 (140 aa).

A run of 3 helical transmembrane segments spans residues 40-60, 70-90, and 92-112; these read MEGV…LLLE, AMQS…VSAI, and IIGW…WIVG.

This sequence belongs to the UPF0132 family.

It is found in the cell membrane. The protein is UPF0132 membrane protein MJ1527 of Methanocaldococcus jannaschii (strain ATCC 43067 / DSM 2661 / JAL-1 / JCM 10045 / NBRC 100440) (Methanococcus jannaschii).